A 1251-amino-acid chain; its full sequence is Phospholipid-transporting ATPase IC (1251 aa).

A disordered region spans residues 1 to 52 (MSTERDSETTFDEESQPNDEVVPYSDDETEDELEDQGSTVEPEQNRVNREAE). The Cytoplasmic segment spans residues 1–121 (MSTERDSETT…LFEQFKRAAN (121 aa)). Acidic residues predominate over residues 25-35 (SDDETEDELED). Positions 43-52 (EQNRVNREAE) are enriched in basic and acidic residues. Residues 122–142 (FYFLILLILQAIPQISTLAWY) form a helical membrane-spanning segment. Topologically, residues 143–144 (TT) are exoplasmic loop. Residues 145-165 (LVPLLLVLGITAIKDLVDDVA) form a helical membrane-spanning segment. Topologically, residues 166–339 (RHKMDKEINN…RTKIDYLMNY (174 aa)) are cytoplasmic. The helical transmembrane segment at 340–360 (MVYTIFIVLILVSAGLAIGHA) threads the bilayer. The Exoplasmic loop segment spans residues 361-385 (YWEAQVGNYSWYLYDGENATPSYRG). The helical transmembrane segment at 386 to 406 (FLNFWGYIIVLNTMVPISLYV) threads the bilayer. At 407–952 (SVEVIRLGQS…SYIRMCKFLR (546 aa)) the chain is on the cytoplasmic side. Aspartate 454 functions as the 4-aspartylphosphate intermediate in the catalytic mechanism. Positions 454, 455, 456, 555, 596, 619, 652, 732, 733, 734, 867, and 873 each coordinate ATP. Aspartate 454 serves as a coordination point for Mg(2+). Position 456 (threonine 456) interacts with Mg(2+). A Mg(2+)-binding site is contributed by aspartate 893. The ATP site is built by asparagine 896 and aspartate 897. Aspartate 897 lines the Mg(2+) pocket. The chain crosses the membrane as a helical span at residues 953-973 (YFFYKNFAFTLVHFWYSFFNG). At 974–982 (YSAQTAYED) the chain is on the exoplasmic loop side. Residues 983–1003 (WFITLYNVLYSSLPVLLMGLL) form a helical membrane-spanning segment. Residues 1004–1032 (DQDVSDKLSLRFPGLYVVGQRDLLFNYKR) are Cytoplasmic-facing. Residues 1033–1053 (FFVSLLHGVLTSMVLFFIPLG) form a helical membrane-spanning segment. Over 1054 to 1071 (AYLQTVGQDGEAPSDYQS) the chain is Exoplasmic loop. The chain crosses the membrane as a helical span at residues 1072–1092 (FAVTVASALVITVNFQIGLDT). Residues 1093 to 1094 (SY) lie on the Cytoplasmic side of the membrane. A helical transmembrane segment spans residues 1095–1115 (WTFVNAFSIFGSIALYFGIMF). The Exoplasmic loop portion of the chain corresponds to 1116-1142 (DFHSAGIHVLFPSAFQFTGTASNALRQ). A helical membrane pass occupies residues 1143 to 1163 (PYIWLTIILTVAVCLLPVVAI). Residues 1164 to 1251 (RFLSMTIWPS…TAEYRRTVES (88 aa)) lie on the Cytoplasmic side of the membrane. Residue serine 1223 is modified to Phosphoserine.

Belongs to the cation transport ATPase (P-type) (TC 3.A.3) family. Type IV subfamily. In terms of assembly, component of a P4-ATPase flippase complex which consists of a catalytic alpha subunit ATP8B1 and an accessory beta subunit TMEM30A. The flippase ATP8B1:TMEM30A complex can form an intermediate phosphoenzyme in vitro. Also interacts with beta subunit TMEM30B. Mg(2+) serves as cofactor. As to expression, hepatocytes, bile duct, intestinal epithelial cells (cholangiocytes and ileocytes), and pancreatic acinar cells.

It is found in the cell membrane. The protein localises to the apical cell membrane. The protein resides in the cell projection. Its subcellular location is the stereocilium. It localises to the endoplasmic reticulum. It is found in the golgi apparatus. The catalysed reaction is ATP + H2O + phospholipidSide 1 = ADP + phosphate + phospholipidSide 2.. It catalyses the reaction a 1,2-diacyl-sn-glycero-3-phosphocholine(out) + ATP + H2O = a 1,2-diacyl-sn-glycero-3-phosphocholine(in) + ADP + phosphate + H(+). The enzyme catalyses a 1,2-diacyl-sn-glycero-3-phospho-L-serine(out) + ATP + H2O = a 1,2-diacyl-sn-glycero-3-phospho-L-serine(in) + ADP + phosphate + H(+). In terms of biological role, catalytic component of a P4-ATPase flippase complex which catalyzes the hydrolysis of ATP coupled to the transport of phospholipids, in particular phosphatidylcholines (PC), from the outer to the inner leaflet of the plasma membrane. May participate in the establishment of the canalicular membrane integrity by ensuring asymmetric distribution of phospholipids in the canicular membrane. Thus may have a role in the regulation of bile acids transport into the canaliculus, uptake of bile acids from intestinal contents into intestinal mucosa or both and protect hepatocytes from bile salts. Involved in the microvillus formation in polarized epithelial cells; the function seems to be independent from its flippase activity. Participates in correct apical membrane localization of CDC42, CFTR and SLC10A2. Enables CDC42 clustering at the apical membrane during enterocyte polarization through the interaction between CDC42 polybasic region and negatively charged membrane lipids provided by ATP8B1. Together with TMEM30A is involved in uptake of the synthetic drug alkylphospholipid perifosine. Required for the preservation of cochlear hair cells in the inner ear. According PubMed:20852622 is proposed to act as cardiolipin transporter during inflammatory injury; the function is questioned by PubMed:21475228. The polypeptide is Phospholipid-transporting ATPase IC (Mus musculus (Mouse)).